The sequence spans 482 residues: Spore germination protein A1 (482 aa).

The next 6 helical transmembrane spans lie at 242-262, 284-304, 321-341, 351-371, 373-393, and 406-426; these read VAILVDSSPFVLLVPVSLGIL, FASIFITLFLSSIYITLVSFH, ENVPFPPIFEALLMEVTIELL, PLGQTIGLVGGVVIGQAAVEA, LVSSILVIVVSVIALASFTVP, and FISMFSAAILGLYGIILFMLV.

This sequence belongs to the GerABKA family.

Its subcellular location is the cell membrane. Functionally, forms a complex at the inner spore membrane which acts as a receptor for L-alanine, thus is involved in the stimulation of germination in response to alanine. Can stimulate germination in the absence of GerD and GerK gene products (fructose and glucose receptors, respectively), but the response is improved in their presence. The sequence is that of Spore germination protein A1 (gerAA) from Bacillus subtilis (strain 168).